Reading from the N-terminus, the 691-residue chain is Elongation factor G 2 (691 aa).

In terms of domain architecture, tr-type G spans 8–287; sequence DRYRNIGIMA…AVVDYLPSPL (280 aa). GTP contacts are provided by residues 17 to 24, 85 to 89, and 139 to 142; these read AHIDAGKT, DTPGH, and NKMD.

It belongs to the TRAFAC class translation factor GTPase superfamily. Classic translation factor GTPase family. EF-G/EF-2 subfamily.

It is found in the cytoplasm. Its function is as follows. Catalyzes the GTP-dependent ribosomal translocation step during translation elongation. During this step, the ribosome changes from the pre-translocational (PRE) to the post-translocational (POST) state as the newly formed A-site-bound peptidyl-tRNA and P-site-bound deacylated tRNA move to the P and E sites, respectively. Catalyzes the coordinated movement of the two tRNA molecules, the mRNA and conformational changes in the ribosome. The polypeptide is Elongation factor G 2 (Myxococcus xanthus (strain DK1622)).